The following is a 483-amino-acid chain: 23S rRNA (uracil(1939)-C(5))-methyltransferase RlmD (483 aa).

The span at 1–11 shows a compositional bias: basic residues; that stretch reads MTGLGKRRPAR. The interval 1–36 is disordered; sequence MTGLGKRRPARSRSGVSGLRERRQPASVERSAGSEG. The region spanning 29–90 is the TRAM domain; it reads ERSAGSEGRR…KRFDEAHVSE (62 aa). 4 residues coordinate [4Fe-4S] cluster: cysteine 103, cysteine 109, cysteine 112, and cysteine 189. S-adenosyl-L-methionine-binding residues include glutamine 298, phenylalanine 332, asparagine 337, glutamate 353, aspartate 379, and aspartate 401. Cysteine 427 (nucleophile) is an active-site residue.

The protein belongs to the class I-like SAM-binding methyltransferase superfamily. RNA M5U methyltransferase family. RlmD subfamily.

The catalysed reaction is uridine(1939) in 23S rRNA + S-adenosyl-L-methionine = 5-methyluridine(1939) in 23S rRNA + S-adenosyl-L-homocysteine + H(+). Functionally, catalyzes the formation of 5-methyl-uridine at position 1939 (m5U1939) in 23S rRNA. The polypeptide is 23S rRNA (uracil(1939)-C(5))-methyltransferase RlmD (Halomonas elongata (strain ATCC 33173 / DSM 2581 / NBRC 15536 / NCIMB 2198 / 1H9)).